A 458-amino-acid polypeptide reads, in one-letter code: uncharacterized protein (458 aa).

It belongs to the glycerate kinase type-2 family.

This is an uncharacterized protein from Caenorhabditis elegans.